A 381-amino-acid polypeptide reads, in one-letter code: 3-dehydroquinate synthase (381 aa).

NAD(+) contacts are provided by residues Glu81–Lys86, Gly115–Asp119, Thr139–Ser140, Lys152, and Lys161. Residues Glu194, His256, and His274 each coordinate Zn(2+).

The protein belongs to the sugar phosphate cyclases superfamily. Dehydroquinate synthase family. It depends on Co(2+) as a cofactor. Zn(2+) is required as a cofactor. Requires NAD(+) as cofactor.

The protein localises to the cytoplasm. The enzyme catalyses 7-phospho-2-dehydro-3-deoxy-D-arabino-heptonate = 3-dehydroquinate + phosphate. Its pathway is metabolic intermediate biosynthesis; chorismate biosynthesis; chorismate from D-erythrose 4-phosphate and phosphoenolpyruvate: step 2/7. Functionally, catalyzes the conversion of 3-deoxy-D-arabino-heptulosonate 7-phosphate (DAHP) to dehydroquinate (DHQ). The chain is 3-dehydroquinate synthase from Rhodopseudomonas palustris (strain TIE-1).